A 407-amino-acid chain; its full sequence is Phosphonoacetate hydrolase (407 aa).

Zn(2+) is bound by residues Asp25, Thr64, Asp202, His206, Asp241, His242, and His368. The substrate site is built by Thr64 and Asp202. His242 and His368 together coordinate substrate.

It belongs to the alkaline phosphatase family. PhnA subfamily. Homodimer. Zn(2+) is required as a cofactor.

The catalysed reaction is phosphonoacetate + H2O = acetate + phosphate + H(+). Its function is as follows. Specifically hydrolyzes phosphonoacetate. Does not have activity on other organophosphonates or acetates. The sequence is that of Phosphonoacetate hydrolase from Pseudomonas putida (Arthrobacter siderocapsulatus).